Here is a 271-residue protein sequence, read N- to C-terminus: 4-diphosphocytidyl-2-C-methyl-D-erythritol kinase (271 aa).

The active site involves K17. 97–107 (PVGSGLGGGSS) serves as a coordination point for ATP. D137 is an active-site residue.

This sequence belongs to the GHMP kinase family. IspE subfamily.

The catalysed reaction is 4-CDP-2-C-methyl-D-erythritol + ATP = 4-CDP-2-C-methyl-D-erythritol 2-phosphate + ADP + H(+). It functions in the pathway isoprenoid biosynthesis; isopentenyl diphosphate biosynthesis via DXP pathway; isopentenyl diphosphate from 1-deoxy-D-xylulose 5-phosphate: step 3/6. Its function is as follows. Catalyzes the phosphorylation of the position 2 hydroxy group of 4-diphosphocytidyl-2C-methyl-D-erythritol. The protein is 4-diphosphocytidyl-2-C-methyl-D-erythritol kinase of Thermotoga maritima (strain ATCC 43589 / DSM 3109 / JCM 10099 / NBRC 100826 / MSB8).